Reading from the N-terminus, the 497-residue chain is Protein adenylyltransferase Fic (497 aa).

Positions 1–30 (MGATDQALEAESKTTEPPKTPPVPEQHDRP) are disordered. A helical transmembrane segment spans residues 38 to 58 (LCHLLVLLFSGGLAAITLHIF). TPR repeat units follow at residues 123–156 (ALGA…APRH) and 157–191 (PTVL…SPSN). An Inhibitory (S/T)XXXE(G/N) motif motif is present at residues 248 to 253 (TVGIEG). ATP contacts are provided by residues E252 and 333–336 (VGGH). The Fido domain maps to 302–437 (ITIKDILELH…IRPFVRFIAD (136 aa)). H380 is an active-site residue. ATP-binding positions include 384 to 391 (DGNGRTSR), 416 to 417 (YY), and N424. The disordered stretch occupies residues 468 to 497 (GEGVPQLQSSQMGGGASIPEFHESGSGSLP).

It belongs to the fic family. Homodimer.

It is found in the membrane. It catalyses the reaction L-tyrosyl-[protein] + ATP = O-(5'-adenylyl)-L-tyrosyl-[protein] + diphosphate. The catalysed reaction is L-threonyl-[protein] + ATP = 3-O-(5'-adenylyl)-L-threonyl-[protein] + diphosphate. It carries out the reaction 3-O-(5'-adenylyl)-L-threonyl-[protein] + H2O = L-threonyl-[protein] + AMP + H(+). Its activity is regulated as follows. The side chain of Glu-252 determines which of the two opposing activities (AMPylase or de-AMPylase) will take place. In response to endoplasmic reticulum stress, mediates de-AMPylase activity. Adenylyltransferase activity is inhibited by the inhibitory helix present at the N-terminus: Glu-252 binds ATP and competes with ATP-binding at Arg-391, thereby preventing adenylyltransferase activity. In unstressed cells, disengagement of Glu-252 promotes adenylyltransferase activity. Activation dissociates ATP-binding from Glu-252, allowing ordered binding of the entire ATP moiety with the alpha-phosphate in an orientation that is productive for accepting an incoming target hydroxyl side chain. Functionally, protein that can both mediate the addition of adenosine 5'-monophosphate (AMP) to specific residues of target proteins (AMPylation), and the removal of the same modification from target proteins (de-AMPylation), depending on the context. The side chain of Glu-252 determines which of the two opposing activities (AMPylase or de-AMPylase) will take place. Acts as a key regulator of the unfolded protein response (UPR) by mediating AMPylation or de-AMPylation of Hsc70-3/BiP. In unstressed cells, acts as an adenylyltransferase by mediating AMPylation of Hsc70-3/BiP at 'Thr-518', thereby inactivating it. In response to endoplasmic reticulum stress, acts as a phosphodiesterase by mediating removal of ATP (de-AMPylation) from Hsc70-3/BiP at 'Thr-518', leading to restore HSPA5/BiP activity. This is Protein adenylyltransferase Fic from Drosophila ananassae (Fruit fly).